Here is an 800-residue protein sequence, read N- to C-terminus: Elongation factor G, mitochondrial (800 aa).

The N-terminal 59 residues, Met-1 to Arg-59, are a transit peptide targeting the mitochondrion. A tr-type G domain is found at Ala-99–Asn-385. GTP-binding positions include Ala-108–Thr-115, Asp-183–His-187, and Asn-237–Asp-240.

This sequence belongs to the TRAFAC class translation factor GTPase superfamily. Classic translation factor GTPase family. EF-G/EF-2 subfamily.

The protein localises to the mitochondrion. Its pathway is protein biosynthesis; polypeptide chain elongation. In terms of biological role, mitochondrial GTPase that catalyzes the GTP-dependent ribosomal translocation step during translation elongation. During this step, the ribosome changes from the pre-translocational (PRE) to the post-translocational (POST) state as the newly formed A-site-bound peptidyl-tRNA and P-site-bound deacylated tRNA move to the P and E sites, respectively. Catalyzes the coordinated movement of the two tRNA molecules, the mRNA and conformational changes in the ribosome. The chain is Elongation factor G, mitochondrial (mef1) from Neurospora crassa (strain ATCC 24698 / 74-OR23-1A / CBS 708.71 / DSM 1257 / FGSC 987).